Consider the following 317-residue polypeptide: Low affinity immunoglobulin gamma Fc region receptor II-a (317 aa).

The N-terminal stretch at 1–33 (MTMETQMSQNVCPRNLWLLQPLTVLLLLASADS) is a signal peptide. Residues 34-217 (QAAAPPKAVL…PSMGSSSPMG (184 aa)) are Extracellular-facing. Ig-like C2-type domains are found at residues 39–118 (PKAV…VHLT) and 122–204 (EWLV…VTIT). 2 disulfide bridges follow: Cys62/Cys104 and Cys143/Cys187. N-linked (GlcNAc...) asparagine glycans are attached at residues Asn97 and Asn178. A helical transmembrane segment spans residues 218–240 (IIVAVVIATAVAAIVAAVVALIY). The Cytoplasmic segment spans residues 241–317 (CRKKRISANS…PPNDHVNSNN (77 aa)). Tyr288 and Tyr304 each carry phosphotyrosine; by SRC-type Tyr-kinases. Residues 292-317 (NPRAPTDDDKNIYLTLPPNDHVNSNN) form a disordered region.

As to quaternary structure, interacts with IGHG1. Interacts with INPP5D/SHIP1 and INPPL1/SHIP2, regulating its function. Interacts with APCS and FGR. Interacts with HCK. Phosphorylated by SRC-type Tyr-kinases such as LYN, BLK, FYN, HCK and SYK. Found on monocytes, neutrophils and eosinophil platelets.

It is found in the cell membrane. In terms of biological role, binds to the Fc region of immunoglobulins gamma. Low affinity receptor. By binding to IgG it initiates cellular responses against pathogens and soluble antigens. Promotes phagocytosis of opsonized antigens. This is Low affinity immunoglobulin gamma Fc region receptor II-a (FCGR2A) from Homo sapiens (Human).